The following is a 184-amino-acid chain: Female-specific protein transformer (184 aa).

Basic and acidic residues-rich tracts occupy residues 1–39 (MKMD…DSRK) and 49–58 (DEVREQDRIR). Disordered stretches follow at residues 1-123 (MKMD…PKII) and 146-184 (YQRL…RPPY). Composition is skewed to basic residues over residues 59-75 (SLRQ…RSRS) and 84-114 (SRHR…RSPH). Pro residues predominate over residues 150–159 (PRPPPFPPAP).

It is found in the nucleus speckle. In terms of biological role, member of the regulatory pathway controlling female somatic sexual differentiation, regulated by Sxl. Activates dsx female-specific splicing by promoting the formation of a splicing enhancer complex which consists of tra, tra2 and sr proteins. This is Female-specific protein transformer (tra) from Drosophila simulans (Fruit fly).